Reading from the N-terminus, the 184-residue chain is Photosystem I assembly protein Ycf4 (184 aa).

2 helical membrane passes run 22–42 and 64–84; these read FCWACITSLGALGFFLVGIPS and IVMCFYGIAGLFPSFYLWCTI.

It belongs to the Ycf4 family.

It localises to the plastid. The protein localises to the chloroplast thylakoid membrane. Seems to be required for the assembly of the photosystem I complex. This is Photosystem I assembly protein Ycf4 from Huperzia lucidula (Shining clubmoss).